A 224-amino-acid chain; its full sequence is MLVNEISENEKPREKLQNYGIEALSTSELVALIIETGTKTESVLTIANRIMMKFKHIAEMQYASIEEFQLVNGIGIAKASKIMAAVELGKRISLVTEQKEIVIRCPEDAVKLVMPELAFLFQEHFHCIFLNTKNQVIYRQTIFVGGLNASIVHPREVFRLALRKSSASIMCFHNHPSGDPAPSSEDLLVTKRLAEAGNIVGITLLDHIIIGKNKYISLKEKGYF.

Residues 102 to 224 (VIRCPEDAVK…YISLKEKGYF (123 aa)) enclose the MPN domain. 3 residues coordinate Zn(2+): histidine 173, histidine 175, and aspartate 186. The JAMM motif signature appears at 173 to 186 (HNHPSGDPAPSSED).

This sequence belongs to the UPF0758 family.

The polypeptide is UPF0758 protein lin1584 (Listeria innocua serovar 6a (strain ATCC BAA-680 / CLIP 11262)).